Here is a 55-residue protein sequence, read N- to C-terminus: Large ribosomal subunit protein bL33 (55 aa).

The protein belongs to the bacterial ribosomal protein bL33 family.

This is Large ribosomal subunit protein bL33 (rpmG) from Nitrobacter hamburgensis (strain DSM 10229 / NCIMB 13809 / X14).